We begin with the raw amino-acid sequence, 388 residues long: Succinate--CoA ligase [ADP-forming] subunit beta (388 aa).

Positions 9 to 244 (KEILRKFGVA…LDEEDPAEIE (236 aa)) constitute an ATP-grasp domain. Residues lysine 46, 53-55 (GRG), glutamate 99, alanine 102, and glutamate 107 each bind ATP. The Mg(2+) site is built by asparagine 199 and aspartate 213. Residues asparagine 264 and 321 to 323 (GIM) each bind substrate.

This sequence belongs to the succinate/malate CoA ligase beta subunit family. Heterotetramer of two alpha and two beta subunits. Mg(2+) serves as cofactor.

It carries out the reaction succinate + ATP + CoA = succinyl-CoA + ADP + phosphate. It catalyses the reaction GTP + succinate + CoA = succinyl-CoA + GDP + phosphate. Its pathway is carbohydrate metabolism; tricarboxylic acid cycle; succinate from succinyl-CoA (ligase route): step 1/1. Succinyl-CoA synthetase functions in the citric acid cycle (TCA), coupling the hydrolysis of succinyl-CoA to the synthesis of either ATP or GTP and thus represents the only step of substrate-level phosphorylation in the TCA. The beta subunit provides nucleotide specificity of the enzyme and binds the substrate succinate, while the binding sites for coenzyme A and phosphate are found in the alpha subunit. The chain is Succinate--CoA ligase [ADP-forming] subunit beta from Burkholderia ambifaria (strain MC40-6).